The following is a 266-amino-acid chain: Putative carbamate hydrolase RutD (266 aa).

Belongs to the AB hydrolase superfamily. Hydrolase RutD family.

The catalysed reaction is carbamate + 2 H(+) = NH4(+) + CO2. In terms of biological role, involved in pyrimidine catabolism. May facilitate the hydrolysis of carbamate, a reaction that can also occur spontaneously. This Escherichia coli O103:H2 (strain 12009 / EHEC) protein is Putative carbamate hydrolase RutD.